A 233-amino-acid chain; its full sequence is MSEAKTLLVGGLWKNNSALVQLLGLCPLLAVTSTATNALGLGLATTLVLTCTNSAISLSRRWVPAEIRIPIYVMIIAAVVSCVQMLINAYAYGLYQSLGIFIPLIVTNCIVVGRAEAVASKSSVPLSALDGMAIGLGATSVMVVLGSIREIIGNGTIFNGADQLLGPWAKAMHIQVVHFDSPMLLAMLPPGAFIGLGMLLAAKYLIDNKMKQRATLKAESQAQGLPEGKTGAL.

The next 5 helical transmembrane spans lie at 22–42, 69–89, 93–113, 128–148, and 182–202; these read LLGL…LGLG, IPIY…LINA, GLYQ…IVVG, ALDG…LGSI, and PMLL…LLAA.

The protein belongs to the NqrDE/RnfAE family. As to quaternary structure, the complex is composed of six subunits: RnfA, RnfB, RnfC, RnfD, RnfE and RnfG.

It is found in the cell inner membrane. Its function is as follows. Part of a membrane-bound complex that couples electron transfer with translocation of ions across the membrane. The chain is Ion-translocating oxidoreductase complex subunit E from Erwinia tasmaniensis (strain DSM 17950 / CFBP 7177 / CIP 109463 / NCPPB 4357 / Et1/99).